Here is a 96-residue protein sequence, read N- to C-terminus: uncharacterized protein (96 aa).

This is an uncharacterized protein from Methanocaldococcus jannaschii (strain ATCC 43067 / DSM 2661 / JAL-1 / JCM 10045 / NBRC 100440) (Methanococcus jannaschii).